The sequence spans 391 residues: Elongation factor Tu (391 aa).

The tr-type G domain occupies 10–201 (KPHVNIGTIG…AVDEYIPTPA (192 aa)). Positions 19–26 (GHVDHGKT) are G1. 19–26 (GHVDHGKT) serves as a coordination point for GTP. Thr26 is a binding site for Mg(2+). The interval 55–59 (GITIS) is G2. The tract at residues 76 to 79 (DCPG) is G3. GTP-binding positions include 76 to 80 (DCPGH) and 131 to 134 (NKVD). Positions 131–134 (NKVD) are G4. Residues 169–171 (SAL) are G5.

The protein belongs to the TRAFAC class translation factor GTPase superfamily. Classic translation factor GTPase family. EF-Tu/EF-1A subfamily. As to quaternary structure, monomer.

The protein resides in the cytoplasm. It catalyses the reaction GTP + H2O = GDP + phosphate + H(+). GTP hydrolase that promotes the GTP-dependent binding of aminoacyl-tRNA to the A-site of ribosomes during protein biosynthesis. The chain is Elongation factor Tu from Cereibacter sphaeroides (strain ATCC 17025 / ATH 2.4.3) (Rhodobacter sphaeroides).